A 169-amino-acid polypeptide reads, in one-letter code: Transmembrane protein 89 (169 aa).

The N-terminal stretch at 1-22 is a signal peptide; that stretch reads MLYTLLLVPSLFLLVMPVPSQG. Residues 23 to 75 are Extracellular-facing; that stretch reads WSRPLWYQVGLDLQPWGCQPNSPDIWGCQPNSLDSCKNSLGCPGYWLGLGGNR. Residues 76 to 96 form a helical membrane-spanning segment; it reads IYPVAGVTITTTMLLVVSRVI. Topologically, residues 97-169 are cytoplasmic; that stretch reads VHRWRAKVAK…QIKGSPPQSG (73 aa).

The protein localises to the membrane. The polypeptide is Transmembrane protein 89 (Tmem89) (Mus musculus (Mouse)).